The primary structure comprises 408 residues: Tyrosine--tRNA ligase (408 aa).

Residues 46–55 carry the 'HIGH' region motif; that stretch reads PTAPDLHVGH. A 'KMSKS' region motif is present at residues 230 to 234; the sequence is KMSKS. Position 233 (Lys233) interacts with ATP. The 62-residue stretch at 343-404 folds into the S4 RNA-binding domain; sequence VWICRLLTDA…GKRRFARIKF (62 aa).

This sequence belongs to the class-I aminoacyl-tRNA synthetase family. TyrS type 2 subfamily. Homodimer.

Its subcellular location is the cytoplasm. It catalyses the reaction tRNA(Tyr) + L-tyrosine + ATP = L-tyrosyl-tRNA(Tyr) + AMP + diphosphate + H(+). In terms of biological role, catalyzes the attachment of tyrosine to tRNA(Tyr) in a two-step reaction: tyrosine is first activated by ATP to form Tyr-AMP and then transferred to the acceptor end of tRNA(Tyr). The protein is Tyrosine--tRNA ligase of Syntrophotalea carbinolica (strain DSM 2380 / NBRC 103641 / GraBd1) (Pelobacter carbinolicus).